Reading from the N-terminus, the 249-residue chain is Tumor necrosis factor ligand superfamily member 12 (249 aa).

The Cytoplasmic portion of the chain corresponds to Met1–Leu21. A helical; Signal-anchor for type II membrane protein transmembrane segment spans residues Val22–Val42. The Extracellular portion of the chain corresponds to Ser43–His249. Residues Pro55–Leu85 form a disordered region. Residues Ala56 to Pro68 show a composition bias toward acidic residues. The 142-residue stretch at Ile107–Val248 folds into the THD domain. Residue Asn139 is glycosylated (N-linked (GlcNAc...) asparagine). Cys191 and Cys210 are disulfide-bonded.

The protein belongs to the tumor necrosis factor family. Homotrimer. Interacts with the angiogenic factor AGGF1/VG5Q. Post-translationally, the soluble form derives from the membrane form by proteolytic processing. As to expression, highly expressed in adult heart, pancreas, skeletal muscle, brain, colon, small intestine, lung, ovary, prostate, spleen, lymph node, appendix and peripheral blood lymphocytes. Low expression in kidney, testis, liver, placenta, thymus and bone marrow. Also detected in fetal kidney, liver, lung and brain.

The protein localises to the cell membrane. It localises to the secreted. Binds to FN14 and possibly also to TNRFSF12/APO3. Weak inducer of apoptosis in some cell types. Mediates NF-kappa-B activation. Promotes angiogenesis and the proliferation of endothelial cells. Also involved in induction of inflammatory cytokines. Promotes IL8 secretion. The sequence is that of Tumor necrosis factor ligand superfamily member 12 (TNFSF12) from Homo sapiens (Human).